A 689-amino-acid chain; its full sequence is UvrABC system protein C (689 aa).

Polar residues predominate over residues 1-19 (MTSDSSDTAKQIGSGQPSG). The tract at residues 1-59 (MTSDSSDTAKQIGSGQPSGSPADMRRRDGVAPEQEVDPASLETDEDDEARLPDLPDEPV) is disordered. Residues 42–59 (ETDEDDEARLPDLPDEPV) are compositionally biased toward acidic residues. Residues 83-161 (TSPGVYRMMN…IKQLRPRFNV (79 aa)) enclose the GIY-YIG domain. The region spanning 271 to 306 (RAVKEDLARAMEQAAADLAFERAALYRDRLAALSAI) is the UVR domain.

Belongs to the UvrC family. As to quaternary structure, interacts with UvrB in an incision complex.

The protein resides in the cytoplasm. Functionally, the UvrABC repair system catalyzes the recognition and processing of DNA lesions. UvrC both incises the 5' and 3' sides of the lesion. The N-terminal half is responsible for the 3' incision and the C-terminal half is responsible for the 5' incision. This Nitrobacter winogradskyi (strain ATCC 25391 / DSM 10237 / CIP 104748 / NCIMB 11846 / Nb-255) protein is UvrABC system protein C.